The sequence spans 204 residues: Phosphoribosyl-dephospho-CoA transferase (204 aa).

Residues aspartate 129 and aspartate 131 contribute to the active site.

Belongs to the MdcG family.

It catalyses the reaction apo-[malonate decarboxylase ACP] + 2'-(5''-triphospho-alpha-D-ribosyl)-3'-dephospho-CoA = holo-[malonate decarboxylase ACP] + diphosphate. Functionally, transfers 2'-(5-triphosphoribosyl)-3'-dephosphocoenzyme-A to the apo-[acyl-carrier-protein] of the malonate decarboxylase to yield holo-[acyl-carrier-protein]. This chain is Phosphoribosyl-dephospho-CoA transferase, found in Pseudomonas putida (strain GB-1).